The sequence spans 202 residues: Probable GTP-binding protein EngB (202 aa).

The 172-residue stretch at 30-201 (NILQIALAGR…WERIQYTIDS (172 aa)) folds into the EngB-type G domain. Residues 38–45 (GRSNVGKS), 65–69 (GKTRS), 84–87 (DLPG), 151–154 (TKID), and 180–182 (VSS) each bind GTP. Positions 45 and 67 each coordinate Mg(2+).

It belongs to the TRAFAC class TrmE-Era-EngA-EngB-Septin-like GTPase superfamily. EngB GTPase family. Requires Mg(2+) as cofactor.

Its function is as follows. Necessary for normal cell division and for the maintenance of normal septation. In Lawsonia intracellularis (strain PHE/MN1-00), this protein is Probable GTP-binding protein EngB.